The following is a 355-amino-acid chain: Probable tRNA-dihydrouridine synthase 1 (355 aa).

Residues 48–50 (PLS) and Q102 contribute to the FMN site. C132 (proton donor) is an active-site residue. Residues K171, 232 to 234 (NGD), and 256 to 257 (SR) each bind FMN.

It belongs to the Dus family. It depends on FMN as a cofactor.

It carries out the reaction a 5,6-dihydrouridine in tRNA + NAD(+) = a uridine in tRNA + NADH + H(+). It catalyses the reaction a 5,6-dihydrouridine in tRNA + NADP(+) = a uridine in tRNA + NADPH + H(+). Functionally, catalyzes the synthesis of 5,6-dihydrouridine (D), a modified base found in the D-loop of most tRNAs, via the reduction of the C5-C6 double bond in target uridines. The chain is Probable tRNA-dihydrouridine synthase 1 (dus1) from Synechocystis sp. (strain ATCC 27184 / PCC 6803 / Kazusa).